The following is a 380-amino-acid chain: Forkhead box protein F1 (380 aa).

The segment covering 1–19 (MTAEVQQPSVQTPAHSSPM) has biased composition (polar residues). Positions 1 to 49 (MTAEVQQPSVQTPAHSSPMTEKPVQTPVMETSSSSSSTKAKKTNAGIRR) are disordered. Positions 52–146 (KPPYSYIALI…EEGSFRRRPR (95 aa)) form a DNA-binding region, fork-head.

Its subcellular location is the nucleus. The protein is Forkhead box protein F1 (foxf1) of Danio rerio (Zebrafish).